We begin with the raw amino-acid sequence, 84 residues long: Cell division topological specificity factor (84 aa).

It belongs to the MinE family.

Functionally, prevents the cell division inhibition by proteins MinC and MinD at internal division sites while permitting inhibition at polar sites. This ensures cell division at the proper site by restricting the formation of a division septum at the midpoint of the long axis of the cell. The protein is Cell division topological specificity factor of Ralstonia pickettii (strain 12J).